The following is a 1175-amino-acid chain: MRLSKSQGILPLAHAVLAAAIAYSTAATAADYRLEAEDFTNVGGTYNDGQPQKISVYTVNGITAINYVNKGDYAEYTLSVPQAGQYDLTYFAGTAIDGARIDFQVNNNGSWQTLARTDVPNAGWDNFQPLPAGSIHLSSGSQQIRLFGGGDHDWQWNLDKMELAYIDDSSSSSGGGSTSSSSSGGSSSSSGSGSSSSGGSPEEGGHVSGTFKLEAESAHHVGGEIDTYAINGGVAVNYFNSGDYLEYNLHLDQSGLYRPKYYVSTAHSSGVAVGLMATDHEGALVTKNTSEVQSQGGWDSFYLLNAASDINLFSGDLTIRIYGAGTQDFQFNIDYVIFERISDVDLDLDGDSDGIADVNDSCPGTDPSETANSEGCAPSQLDTDKDGIADNRDQCPTTAPGDFVDSEGCASTGADDDDLDGIANQEDQCPDTPFGENVAPSGCTGFEDSDSDGIANGTDQCPSTPAKEFTNESGCSPSQVANPHSVKVTVNANIKHSVKGISDFGRNRHITAHTTIYEKDWEGHADKLNYLVNTLDVTLGRDNGTATWKFQDTKEDPNRENWPDLDYMVTRGKELRENYEANPFYKRFSADRTELIAGTNPHPTYPTLSWNANGSTWHDWQPMHIETSAAWMGQYLKHYYANSSNGYIGDPMPKFWEVINEPDMEMKTGKFMVTNQEAIWEYHNLVAQEIRSKLGNEAPLIGGMTWGQHDFYRRDGISRYADNAYDQWIVADDPAEEAAAEEFFRQAMATTVDDTRDQNWYQWDVMWKGFMDAAGHNMDFYSVHVYDWPGVNSDAKSTLRRNGHLPAMLDMIEWYDVYQNGQANRKPIVISEYGAVQGGWNTLAHQPRFESEVLKSFNAMLMQILERPDYVIKSMPFTPAKPLWGYYPGGCGYEEVRNCTAPYHYSLLIEPVLNSDNWQWSDYIKFYELWADIDGTRVDSVSSDPDVQVQSYVNNNELFIIINNLETVDTTIDLTVAGLNNAQLQNVELRNMHFDNNFDTQLERHHMKQMPTKVTLAADATLVLRYTLNSTIAINQSVDEKKYFGNSVSGGSVPHRISVAGGAKNLQVNNVSVPSGYAESQLRLTVALYPSQDDTPDSLLQIDTLTINGHTIETPIDWRGRKENSVERYFNTLEIPVPVDVLQKNNTISVDFRHNGELTVANLVIKEYTTTPVRH.

An N-terminal signal peptide occupies residues Met-1–Ala-29. One can recognise a CBM6 1 domain in the interval Tyr-32–Ala-164. Positions Ser-169–Ser-208 are disordered. The segment covering Thr-178–Ser-200 has biased composition (low complexity). Residues Phe-211–Glu-339 form the CBM6 2 domain. The segment at Ile-355–Ala-481 is disordered. Basic and acidic residues predominate over residues Asp-382–Asp-393. Over residues Asn-471–Ala-481 the composition is skewed to polar residues. The active-site Proton donor is the Glu-661. The Nucleophile role is filled by Glu-832.

It belongs to the glycosyl hydrolase 86 family.

It catalyses the reaction Hydrolysis of (1-&gt;4)-beta-D-galactosidic linkages in agarose, giving the tetramer as the predominant product.. Activity and stability are strongly enhanced by CaCl(2). Activity is not affected by sulfhydryl inhibitors such as iodoacetoamide and p-chloromercuribenzoate or by thiol reagents such as dithiothreitol and 2-mercaptoethanol. Strongly inhibited by N-bromosuccinimide and sodium dodecyl sulfate. Its function is as follows. Endo-type beta-agarase, which degrades agarose and agarose oligosaccharides more polymerized than hexamers to yield neoagarohexaose (NA6) as the main product, with lesser amounts of neoagarotetraose (NA4) and neoagarobiose (NA2). In Microbulbifer thermotolerans, this protein is Beta-agarase AgaO.